A 704-amino-acid chain; its full sequence is MALDVLTDLTKVRNIGIMAHIDAGKTTTTERILFYTGVNYKIGETHDGASTTDWMEQEQERGITITSAAVTCFWNGTQINIIDTPGHVDFTVEVERSLRVLDGAVAVFDGKEGVEPQSETVWRQADKYDVPRICFVNKMDKLGADFYFTVDTIVGRLGARPLVLQLPIGAENDFIGVVDLVEMRALVWPADSKGDTTMGAKYEVQEIPADLREKADEYRAKLIETVAETDDALLEKFFAGEELTVAEIKAGIRKLTVASEIYPVLCGSAFKNRGVQPMLDAVVDYLPSPLDVPAVEGHSVKDEEETITRAPDSSAPFAALAYKIATHPFFGKLIYVRVYSGKVTPGTQVINATKGKKERIGKLFQMHANKENPVDEATAGHIYAFIGLKDVTTGDTLSDIANPVVLESMTFPDPVIEVAIEPKTKGDQEKLSTAIQKLAEEDPTFQVMLDQETGQTVIKGMGELHLDILVDRMRREFKVEANVGKPQVAYRETIRRKVEKVEYVHKKQTGGSGQFAKVQMTFEPLDTAEGELYEFVNSVTGGRIPREYIPSVDHGIQDAMQAGVLAGYPLVGVKATLLDGAYHEVDSSEMAFKIAGSMVLKEGVRRADPVLLEPLMDVEVRTPEEYMGDVIGDLNSRRGHIQSMQDASGVKVVRALVPLSELFGYIGDLRSKTQGRAVYSMQFDSYAEVPRNVAEEIIKKTRGE.

A tr-type G domain is found at 10 to 290 (TKVRNIGIMA…AVVDYLPSPL (281 aa)). GTP is bound by residues 19–26 (AHIDAGKT), 83–87 (DTPGH), and 137–140 (NKMD).

Belongs to the TRAFAC class translation factor GTPase superfamily. Classic translation factor GTPase family. EF-G/EF-2 subfamily.

The protein localises to the cytoplasm. In terms of biological role, catalyzes the GTP-dependent ribosomal translocation step during translation elongation. During this step, the ribosome changes from the pre-translocational (PRE) to the post-translocational (POST) state as the newly formed A-site-bound peptidyl-tRNA and P-site-bound deacylated tRNA move to the P and E sites, respectively. Catalyzes the coordinated movement of the two tRNA molecules, the mRNA and conformational changes in the ribosome. The chain is Elongation factor G from Beutenbergia cavernae (strain ATCC BAA-8 / DSM 12333 / CCUG 43141 / JCM 11478 / NBRC 16432 / NCIMB 13614 / HKI 0122).